The sequence spans 347 residues: Protein RecA (347 aa).

Position 64–71 (64–71 (GPESSGKT)) interacts with ATP.

Belongs to the RecA family.

The protein localises to the cytoplasm. Functionally, can catalyze the hydrolysis of ATP in the presence of single-stranded DNA, the ATP-dependent uptake of single-stranded DNA by duplex DNA, and the ATP-dependent hybridization of homologous single-stranded DNAs. It interacts with LexA causing its activation and leading to its autocatalytic cleavage. The chain is Protein RecA from Bartonella henselae (strain ATCC 49882 / DSM 28221 / CCUG 30454 / Houston 1) (Rochalimaea henselae).